Reading from the N-terminus, the 476-residue chain is MEPLAILVLLCFPICSAYPLHGAVRQDHSTMDLAQQYLEKYYNFRKNEKQFFKRKDSSPVVKKIEEMQKFLGLEMTGKLDSNTVEMMHKPRCGVPDVGGFSTFPGSPKWRKNHISYRIVNYTLDLPRESVDSAIERALKVWEEVTPLTFSRISEGEADIMISFAVGEHGDFYPFDGVGQSLAHAYPPGPGFYGDAHFDDDEKWSLGPSGTNLFLVAAHELGHSLGLFHSNNKESLMYPVYRFSTSQANIRLSQDDIEGIQSLYGARPSSDATVVPVPSVSPKPETPVKCDPALSFDAVTMLRGEFLFFKDRHFWRRTQWNPEPEFHLISAFWPSLPSGLDAAYEANNKDRVLIFKGSQFWAVRGNEVQAGYPKRIHTLGFPPTVKKIDAAVFEKEKKKTYFFVGDKYWRFDETRQLMDKGFPRLITDDFPGIEPQVDAVLHAFGFFYFFCGSSQFEFDPNARTVTHTLKSNSWLLC.

The signal sequence occupies residues 1 to 17; that stretch reads MEPLAILVLLCFPICSA. A propeptide spans 18 to 99 (activation peptide); that stretch reads YPLHGAVRQD…PRCGVPDVGG (82 aa). The Cysteine switch motif lies at 90 to 97; it reads PRCGVPDV. Zn(2+) contacts are provided by Cys92, His168, Asp170, His183, His196, and His218. The active site involves Glu219. The Zn(2+) site is built by His222 and His228. Hemopexin repeat units follow at residues 286 to 335, 336 to 382, 384 to 432, and 433 to 476; these read PVKC…WPSL, PSGL…GFPP, VKKI…FPGI, and EPQV…WLLC. Cys289 and Cys476 are disulfide-bonded.

This sequence belongs to the peptidase M10A family. It depends on Zn(2+) as a cofactor. Requires Ca(2+) as cofactor.

The protein localises to the secreted. The protein resides in the extracellular space. Its subcellular location is the extracellular matrix. The enzyme catalyses Similar to stromelysin 1, but action on collagen types III, IV and V is weak.. Can degrade fibronectin, gelatins of type I, III, IV, and V; weakly collagens III, IV, and V. Activates procollagenase. The sequence is that of Stromelysin-2 (Mmp10) from Rattus norvegicus (Rat).